A 586-amino-acid polypeptide reads, in one-letter code: Ezrin (586 aa).

Residues 2–296 enclose the FERM domain; the sequence is PKPINVRVTT…NHELYMRRRK (295 aa). The residue at position 60 (Lys60) is an N6-acetyllysine. The short motif at 115-120 is the [IL]-x-C-x-x-[DE] motif element; sequence IYCPPE. Tyr146 bears the Phosphotyrosine; by PDGFR mark. The segment at 244 to 586 is interaction with SCYL3; that stretch reads EIRNISFNDK…KQRIDEFEAL (343 aa). Residues 302 to 462 adopt a coiled-coil conformation; the sequence is VQQMKAQARE…QDDLVKTKEE (161 aa). Residues 306-341 are disordered; that stretch reads KAQAREEKHQKQLERQQLETEKKRRETVEREKEQMM. Residues 308 to 341 show a composition bias toward basic and acidic residues; sequence QAREEKHQKQLERQQLETEKKRRETVEREKEQMM. Tyr354 is subject to Phosphotyrosine; by PDGFR. Ser366 carries the phosphoserine modification. Tyr478 is subject to Phosphotyrosine. Residues 485-564 form a disordered region; that stretch reads VQESLQDEGA…NENMRQGRDK (80 aa). Positions 507–528 are enriched in basic and acidic residues; that stretch reads GIRDDRNEEKRITEAEKNERVQ. Residues 530-539 are compositionally biased toward polar residues; that stretch reads QLLTLSSELS. Residue Ser535 is modified to Phosphoserine. Residues 540-564 show a composition bias toward basic and acidic residues; sequence QARDENKRTHNDIIHNENMRQGRDK. Thr567 is modified (phosphothreonine; by ROCK2 and PKC/PRKCI).

As to quaternary structure, monomer. Homodimer. Interacts with PALS1 and NHERF2. Found in a complex with EZR, PODXL and NHERF2. Interacts with MCC, PLEKHG6, PODXL, SCYL3/PACE1, NHERF1 and TMEM8B. Interacts (when phosphorylated) with FES/FPS. Interacts with dimeric S100P, the interaction may be activating through unmasking of F-actin binding sites. Identified in complexes that contain VIM, EZR, AHNAK, BFSP1, BFSP2, ANK2, PLEC, PRX and spectrin. Detected in a complex composed of at least EZR, AHNAK, PPL and PRX. Interacts with PDPN (via cytoplasmic domain); activates RHOA and promotes epithelial-mesenchymal transition. Interacts with SPN/CD43 cytoplasmic tail, CD44 and ICAM2. Interacts with SLC9A3; interaction targets SLC9A3 to the apical membrane. Interacts with SLC9A1; regulates interactions of SLC9A1 with cytoskeletal and promotes stress fiber formation. Interacts with CLIC5; may work together in a complex which also includes RDX and MYO6 to stabilize linkages between the plasma membrane and subjacent actin cytoskeleton at the base of stereocilia. Phosphorylated by tyrosine-protein kinases. Phosphorylation by ROCK2 suppresses the head-to-tail association of the N-terminal and C-terminal halves resulting in an opened conformation which is capable of actin and membrane-binding. Post-translationally, S-nitrosylation is induced by interferon-gamma and oxidatively-modified low-densitity lipoprotein (LDL(ox)) possibly implicating the iNOS-S100A8/9 transnitrosylase complex. In terms of tissue distribution, expressed in cerebral cortex, basal ganglia, hippocampus, hypophysis, and optic nerve. Weakly expressed in brain stem and diencephalon. Stronger expression was detected in gray matter of frontal lobe compared to white matter (at protein level). Component of the microvilli of intestinal epithelial cells. Preferentially expressed in astrocytes of hippocampus, frontal cortex, thalamus, parahippocampal cortex, amygdala, insula, and corpus callosum. Not detected in neurons in most tissues studied.

The protein resides in the apical cell membrane. Its subcellular location is the cell projection. It is found in the microvillus membrane. It localises to the ruffle membrane. The protein localises to the cytoplasm. The protein resides in the cell cortex. Its subcellular location is the cytoskeleton. It is found in the microvillus. Its activity is regulated as follows. A head-to-tail association, of the N-terminal and C-terminal halves results in a closed conformation (inactive form) which is incapable of actin or membrane-binding. Its function is as follows. Probably involved in connections of major cytoskeletal structures to the plasma membrane. In epithelial cells, required for the formation of microvilli and membrane ruffles on the apical pole. Along with PLEKHG6, required for normal macropinocytosis. This is Ezrin (EZR) from Homo sapiens (Human).